A 542-amino-acid polypeptide reads, in one-letter code: Putative cysteine ligase BshC (542 aa).

Positions Val-458–Glu-487 form a coiled coil.

The protein belongs to the BshC family.

Its function is as follows. Involved in bacillithiol (BSH) biosynthesis. May catalyze the last step of the pathway, the addition of cysteine to glucosamine malate (GlcN-Mal) to generate BSH. The sequence is that of Putative cysteine ligase BshC from Geobacillus kaustophilus (strain HTA426).